Consider the following 559-residue polypeptide: Putative ankyrin repeat protein RBE_0902 (559 aa).

ANK repeat units lie at residues 11–40, 46–75, 81–110, 158–189, 228–257, 263–292, 298–327, 333–364, 372–402, and 524–554; these read DGWTVLTFAAAYGLEKVCEALIPKMSEQAI, DGNTALTWAAYTGLEKVCEALIPKMSDQAI, DGNTALSIARNKGFKNMCDLLTTIEATKQN, DDWTALTFAAAYGLEKVCELLIPKMTDQVINH, NNDTVLTLAANKSLGKICEILIPKMTDQAI, DGNTALIAAASSHLEKICEALIPKMSDQAI, YGNTALIAAASSGLEKVCETLIPKMTEQAI, QCDTALIFAVRNSLKKVCEVLIPKMSYEAINC, FGFTAFTWVTLNGDKKICELLIPKTSPEVII, and IDNNEIHISCLTTEIIAHIVEYLENEKWGLE.

The polypeptide is Putative ankyrin repeat protein RBE_0902 (Rickettsia bellii (strain RML369-C)).